We begin with the raw amino-acid sequence, 594 residues long: Proteasome-associated ATPase (594 aa).

The stretch at 20 to 98 (DDLAAQVTYL…KEEIDRLAQP (79 aa)) forms a coiled coil. 282-287 (GCGKTL) is a binding site for ATP. Residues 593-594 (YL) form a docks into pockets in the proteasome alpha-ring region.

It belongs to the AAA ATPase family. As to quaternary structure, homohexamer. Assembles into a hexameric ring structure that caps the 20S proteasome core. Strongly interacts with the prokaryotic ubiquitin-like protein Pup through a hydrophobic interface; the interacting region of ARC lies in its N-terminal coiled-coil domain. There is one Pup binding site per ARC hexamer ring. Upon ATP-binding, the C-terminus of ARC interacts with the alpha-rings of the proteasome core, possibly by binding to the intersubunit pockets.

Its pathway is protein degradation; proteasomal Pup-dependent pathway. ATPase which is responsible for recognizing, binding, unfolding and translocation of pupylated proteins into the bacterial 20S proteasome core particle. May be essential for opening the gate of the 20S proteasome via an interaction with its C-terminus, thereby allowing substrate entry and access to the site of proteolysis. Thus, the C-termini of the proteasomal ATPase may function like a 'key in a lock' to induce gate opening and therefore regulate proteolysis. The polypeptide is Proteasome-associated ATPase (Catenulispora acidiphila (strain DSM 44928 / JCM 14897 / NBRC 102108 / NRRL B-24433 / ID139908)).